A 364-amino-acid chain; its full sequence is DNA replication and repair protein RecF (364 aa).

30-37 is an ATP binding site; sequence GNNAQGKT.

This sequence belongs to the RecF family.

It is found in the cytoplasm. Its function is as follows. The RecF protein is involved in DNA metabolism; it is required for DNA replication and normal SOS inducibility. RecF binds preferentially to single-stranded, linear DNA. It also seems to bind ATP. This is DNA replication and repair protein RecF from Streptococcus uberis (strain ATCC BAA-854 / 0140J).